Consider the following 223-residue polypeptide: MKRN2 opposite strand protein (223 aa).

The chain is MKRN2 opposite strand protein (MKRN2OS) from Homo sapiens (Human).